Here is a 189-residue protein sequence, read N- to C-terminus: GMP synthase [glutamine-hydrolyzing] subunit A (189 aa).

Residues 5–189 enclose the Glutamine amidotransferase type-1 domain; it reads KIIVINNYGQ…MNFFKVCEDY (185 aa). Catalysis depends on Cys-79, which acts as the Nucleophile. Active-site residues include His-166 and Glu-168.

As to quaternary structure, heterodimer composed of a glutamine amidotransferase subunit (A) and a GMP-binding subunit (B).

The enzyme catalyses XMP + L-glutamine + ATP + H2O = GMP + L-glutamate + AMP + diphosphate + 2 H(+). It functions in the pathway purine metabolism; GMP biosynthesis; GMP from XMP (L-Gln route): step 1/1. Catalyzes the synthesis of GMP from XMP. The protein is GMP synthase [glutamine-hydrolyzing] subunit A of Methanococcoides burtonii (strain DSM 6242 / NBRC 107633 / OCM 468 / ACE-M).